We begin with the raw amino-acid sequence, 376 residues long: N-acetyldiaminopimelate deacetylase (376 aa).

Asp69 is a catalytic residue. The Proton acceptor role is filled by Glu128.

The protein belongs to the peptidase M20A family. N-acetyldiaminopimelate deacetylase subfamily.

The catalysed reaction is N-acetyl-(2S,6S)-2,6-diaminopimelate + H2O = (2S,6S)-2,6-diaminopimelate + acetate. It participates in amino-acid biosynthesis; L-lysine biosynthesis via DAP pathway; LL-2,6-diaminopimelate from (S)-tetrahydrodipicolinate (acetylase route): step 3/3. In terms of biological role, catalyzes the conversion of N-acetyl-diaminopimelate to diaminopimelate and acetate. In Streptococcus pneumoniae (strain 70585), this protein is N-acetyldiaminopimelate deacetylase.